We begin with the raw amino-acid sequence, 497 residues long: PHD finger protein 10 (497 aa).

Over residues 1–13 (MTAAGPGAAPSPG) the composition is skewed to low complexity. The tract at residues 1–61 (MTAAGPGAAP…SSRSCETSSQ (61 aa)) is disordered. A phosphoserine mark is found at Ser11, Ser35, and Ser49. Residues 88-184 (MLQEQVSEYL…HYKEYSQMQQ (97 aa)) are essential to induce neural progenitor proliferation. An SAY region spans residues 88 to 294 (MLQEQVSEYL…PPLDPELPAL (207 aa)). Lys240 is covalently cross-linked (Glycyl lysine isopeptide (Lys-Gly) (interchain with G-Cter in SUMO2)). The residue at position 269 (Ser269) is a Phosphoserine. A compositionally biased stretch (low complexity) spans 284–295 (EPPLDPELPALD). The segment at 284-368 (EPPLDPELPA…RSVLSKSAPG (85 aa)) is disordered. Positions 291 to 333 (LPALDSDGDSDDGEDGGGDEKRKNKGTSDSSSGNVSEGDSPPD) are essential to induce neural progenitor proliferation. Phosphoserine occurs at positions 296, 300, 326, and 330. The span at 296–307 (SDGDSDDGEDGG) shows a compositional bias: acidic residues. Polar residues predominate over residues 317-327 (TSDSSSGNVSE). The span at 337–358 (DTFHGRQKSKDKMATPRKDGSK) shows a compositional bias: basic and acidic residues. The PHD-type 1; degenerate zinc finger occupies 378–435 (LCGICLKGKESNKKGKAESLIHCSQCDNSGHPSCLDMTMELVSMIKTYPWQCMECKTC). Lys384 is covalently cross-linked (Glycyl lysine isopeptide (Lys-Gly) (interchain with G-Cter in SUMO2)). The PHD-type 2; degenerate zinc finger occupies 437-480 (ICGQPHHEEEMMFCDVCDRGYHTFCVGLGAIPSGRWICDCCQRA).

This sequence belongs to the SAYP family. As to quaternary structure, component of neural progenitors-specific chromatin remodeling complex (npBAF complex) composed of at least, ARID1A/BAF250A or ARID1B/BAF250B, SMARCD1/BAF60A, SMARCD3/BAF60C, SMARCA2/BRM/BAF190B, SMARCA4/BRG1/BAF190A, SMARCB1/BAF47, SMARCC1/BAF155, SMARCE1/BAF57, SMARCC2/BAF170, PHF10/BAF45A, ACTL6A/BAF53A and actin. Interacts with ACTL6A/BAF53A, SMARCA2/BRM/BAF190B, SMARCA4/BRG1/BAF190A and PBRM1/BAF180. In terms of tissue distribution, widely expressed. Expressed selectively in neural stem and progenitor cells (at protein level).

The protein resides in the nucleus. In terms of biological role, involved in transcription activity regulation by chromatin remodeling. Belongs to the neural progenitors-specific chromatin remodeling complex (npBAF complex) and is required for the proliferation of neural progenitors. During neural development a switch from a stem/progenitor to a post-mitotic chromatin remodeling mechanism occurs as neurons exit the cell cycle and become committed to their adult state. The transition from proliferating neural stem/progenitor cells to post-mitotic neurons requires a switch in subunit composition of the npBAF and nBAF complexes. As neural progenitors exit mitosis and differentiate into neurons, npBAF complexes which contain ACTL6A/BAF53A and PHF10/BAF45A, are exchanged for homologous alternative ACTL6B/BAF53B and DPF1/BAF45B or DPF3/BAF45C subunits in neuron-specific complexes (nBAF). The npBAF complex is essential for the self-renewal/proliferative capacity of the multipotent neural stem cells. The nBAF complex along with CREST plays a role regulating the activity of genes essential for dendrite growth. The polypeptide is PHD finger protein 10 (Phf10) (Mus musculus (Mouse)).